The sequence spans 1117 residues: Protein rliB (1117 aa).

Positions 1 to 23 (MKNINNKILKIFILFLAICSVKS) are cleaved as a signal peptide. Asparagine 136, asparagine 195, asparagine 279, and asparagine 318 each carry an N-linked (GlcNAc...) asparagine glycan. One can recognise a G8 domain in the interval 266-392 (STWSNNLVPQ…YHNSWTKLAS (127 aa)). PbH1 repeat units follow at residues 522 to 544 (VQKS…TIHG) and 545 to 567 (TNNL…YLED). Residues asparagine 547 and asparagine 605 are each glycosylated (N-linked (GlcNAc...) asparagine). The PbH1 3 repeat unit spans residues 621–642 (NAYNTIIGNSASGGWAGFSFPN). Asparagine 728, asparagine 845, asparagine 1030, asparagine 1044, asparagine 1091, and asparagine 1107 each carry an N-linked (GlcNAc...) asparagine glycan.

The protein belongs to the comF family.

Its subcellular location is the secreted. The protein is Protein rliB (rliB) of Dictyostelium discoideum (Social amoeba).